The primary structure comprises 148 residues: Receptor activity-modifying protein 3 (148 aa).

Residues 1–23 form the signal peptide; it reads METGALRRPQLLPLLLLLCGGCP. Topologically, residues 24–113 are extracellular; that stretch reads RAGGCNETGM…CTVDRVHLED (90 aa). Asn29, Asn58, Asn71, and Asn103 each carry an N-linked (GlcNAc...) asparagine glycan. 2 disulfides stabilise this stretch: Cys40–Cys72 and Cys57–Cys104. The helical transmembrane segment at 114–138 threads the bilayer; it reads PPDEVLIPLIVIPVVLTVAMAGLVV. Over 139–148 the chain is Cytoplasmic; sequence WRSKRTDTLL.

The protein belongs to the RAMP family. Heterodimer of CALCRL and RAMP3; interaction induces allosteric modulation of CALCRL function and ligand specificity for adrenomedullin/ADM and intermedin/ADM2. Heterodimer of CALCR and RAMP3; interaction form the receptor complex AMYR3 for amylin/IAPP. Interacts with GPER1. Strongly expressed in lung, breast, immune system and fetal tissues.

It localises to the cell membrane. The protein localises to the membrane. In terms of biological role, accessory protein that interacts with and modulates the function of G-protein coupled receptors including calcitonin gene-related peptide type 1 receptor (CALCRL), calcitonin receptor (CALCR) and G-protein coupled estrogen receptor 1 (GPER1). Required for the transport of CALCRL and GPER1 receptors to the plasma membrane. Plays a role in cardioprotection by reducing cardiac hypertrophy and perivascular fibrosis in a GPER1-dependent manner. Together with CALCRL, form a receptor complex for adrenomedullin/ADM and intermedin/ADM2. Together with CALCR, act as a receptor complex for amylin/IAPP. The sequence is that of Receptor activity-modifying protein 3 from Homo sapiens (Human).